Here is a 156-residue protein sequence, read N- to C-terminus: UPF0587 protein (156 aa).

Zn(2+) contacts are provided by cysteine 32, cysteine 35, cysteine 64, and cysteine 67.

This sequence belongs to the UPF0587 family.

The polypeptide is UPF0587 protein (Dictyostelium discoideum (Social amoeba)).